Reading from the N-terminus, the 171-residue chain is MKTIKKEFVKKTSPYEEKVVKIKRITKVVKGGRRFRFSALVVVGNKKDQIGFATAKAQEIVDAIKKAVEKAKKQLIRIPIVGTTIPHDTIGHFGASKFLLRPASKGTGIVAGGAAARTVLELVGISDVLTKTFGSRTSINVIRAVMDGLKNLRTKEEVAKLRGLTLAKNEQ.

One can recognise an S5 DRBM domain in the interval 15-78; that stretch reads YEEKVVKIKR…EKAKKQLIRI (64 aa).

It belongs to the universal ribosomal protein uS5 family. As to quaternary structure, part of the 30S ribosomal subunit. Contacts proteins S4 and S8.

In terms of biological role, with S4 and S12 plays an important role in translational accuracy. Located at the back of the 30S subunit body where it stabilizes the conformation of the head with respect to the body. The sequence is that of Small ribosomal subunit protein uS5 from Phytoplasma australiense.